Reading from the N-terminus, the 532-residue chain is Chondroitin sulfate N-acetylgalactosaminyltransferase 1 (532 aa).

At 1-14 (MMMVRRGLLAWISR) the chain is on the cytoplasmic side. A helical; Signal-anchor for type II membrane protein transmembrane segment spans residues 15–35 (VVVLLVLLCCAISVLYMLACT). Topologically, residues 36 to 532 (PKGDEEQLAL…QKQKTSSKKT (497 aa)) are lumenal. Residues 57-100 (YQAVLQEWEEQHRNYVSSLKRQIAQLKEELQERSEQLRNGQYQA) are a coiled coil. N-linked (GlcNAc...) asparagine glycans are attached at residues Asn-315 and Asn-324. Positions 360 and 477 each coordinate a divalent metal cation.

This sequence belongs to the chondroitin N-acetylgalactosaminyltransferase family. N-glycosylated. As to expression, ubiquitous, with the highest levels in placenta, thyroid, bladder, prostate and adrenal gland. Detected at low levels in the other tissues examined.

The protein resides in the golgi apparatus. It localises to the golgi stack membrane. It carries out the reaction 3-O-(beta-D-GlcA-(1-&gt;3)-beta-D-Gal-(1-&gt;3)-beta-D-Gal-(1-&gt;4)-beta-D-Xyl)-L-seryl-[protein] + UDP-N-acetyl-alpha-D-galactosamine = 3-O-(beta-D-GalNAc-(1-&gt;4)-beta-D-GlcA-(1-&gt;3)-beta-D-Gal-(1-&gt;3)-beta-D-Gal-(1-&gt;4)-beta-D-Xyl)-L-seryl-[protein] + UDP + H(+). Functionally, transfers 1,4-N-acetylgalactosamine (GalNAc) from UDP-GalNAc to the non-reducing end of glucuronic acid (GlcUA). Required for addition of the first GalNAc to the core tetrasaccharide linker and for elongation of chondroitin chains. Important role in chondroitin chain biosynthesis in cartilage formation and subsequent endochondral ossification. Moreover, is involved in the metabolism of aggrecan. The chain is Chondroitin sulfate N-acetylgalactosaminyltransferase 1 from Homo sapiens (Human).